We begin with the raw amino-acid sequence, 572 residues long: Methionine--tRNA ligase (572 aa).

The short motif at 11 to 21 (PYINGVKHLGN) is the 'HIGH' region element. 4 residues coordinate Zn(2+): C143, C146, C156, and C159. Positions 341-345 (KFSTS) match the 'KMSKS' region motif. T344 provides a ligand contact to ATP.

Belongs to the class-I aminoacyl-tRNA synthetase family. MetG type 1 subfamily. As to quaternary structure, monomer. Zn(2+) serves as cofactor.

It is found in the cytoplasm. The enzyme catalyses tRNA(Met) + L-methionine + ATP = L-methionyl-tRNA(Met) + AMP + diphosphate. Functionally, is required not only for elongation of protein synthesis but also for the initiation of all mRNA translation through initiator tRNA(fMet) aminoacylation. This Maricaulis maris (strain MCS10) (Caulobacter maris) protein is Methionine--tRNA ligase.